An 87-amino-acid polypeptide reads, in one-letter code: Sec-independent protein translocase protein TatA (87 aa).

A helical membrane pass occupies residues Gly3–Ala23. The disordered stretch occupies residues Met47 to Ala87. The span at Pro52–Ala87 shows a compositional bias: low complexity.

Belongs to the TatA/E family. As to quaternary structure, the Tat system comprises two distinct complexes: a TatABC complex, containing multiple copies of TatA, TatB and TatC subunits, and a separate TatA complex, containing only TatA subunits. Substrates initially bind to the TatABC complex, which probably triggers association of the separate TatA complex to form the active translocon.

The protein resides in the cell membrane. Its function is as follows. Part of the twin-arginine translocation (Tat) system that transports large folded proteins containing a characteristic twin-arginine motif in their signal peptide across membranes. TatA could form the protein-conducting channel of the Tat system. In Nocardia farcinica (strain IFM 10152), this protein is Sec-independent protein translocase protein TatA.